Here is a 238-residue protein sequence, read N- to C-terminus: 2-C-methyl-D-erythritol 4-phosphate cytidylyltransferase (238 aa).

The protein belongs to the IspD/TarI cytidylyltransferase family. IspD subfamily.

It carries out the reaction 2-C-methyl-D-erythritol 4-phosphate + CTP + H(+) = 4-CDP-2-C-methyl-D-erythritol + diphosphate. Its pathway is isoprenoid biosynthesis; isopentenyl diphosphate biosynthesis via DXP pathway; isopentenyl diphosphate from 1-deoxy-D-xylulose 5-phosphate: step 2/6. Catalyzes the formation of 4-diphosphocytidyl-2-C-methyl-D-erythritol from CTP and 2-C-methyl-D-erythritol 4-phosphate (MEP). The chain is 2-C-methyl-D-erythritol 4-phosphate cytidylyltransferase from Aliivibrio fischeri (strain ATCC 700601 / ES114) (Vibrio fischeri).